A 301-amino-acid polypeptide reads, in one-letter code: RNA polymerase II holoenzyme cyclin-like subunit (301 aa).

One can recognise a Cyclin N-terminal domain in the interval 53–142 (QQLIKLGKRM…LGECEFALIS (90 aa)).

It belongs to the cyclin family. Cyclin C subfamily. In terms of assembly, component of the srb8-11 complex, a regulatory module of the Mediator complex.

The protein resides in the nucleus. In terms of biological role, component of the srb8-11 complex. The srb8-11 complex is a regulatory module of the Mediator complex which is itself involved in regulation of basal and activated RNA polymerase II-dependent transcription. The srb8-11 complex may be involved in the transcriptional repression of a subset of genes regulated by Mediator. It may inhibit the association of the Mediator complex with RNA polymerase II to form the holoenzyme complex. The srb8-11 complex phosphorylates the C-terminal domain (CTD) of the largest subunit of RNA polymerase II. This chain is RNA polymerase II holoenzyme cyclin-like subunit (ssn8), found in Aspergillus oryzae (strain ATCC 42149 / RIB 40) (Yellow koji mold).